The sequence spans 428 residues: NADH-ubiquinone oxidoreductase chain 2 (428 aa).

A run of 14 helical transmembrane segments spans residues 22–42 (IAFL…LHFG), 59–79 (LDES…VIMN), 84–104 (LGWE…YMLT), 108–128 (LLLM…ILSL), 140–160 (LLSS…FYGL), 185–205 (ILLL…LWVP), 218–238 (WMGS…YPLL), 241–261 (LAPF…VLMA), 269–289 (FLAY…AIGD), 292–312 (AYGY…VLLS), 332–352 (LGLG…FAGF), 356–376 (LLVL…LLIL), 384–404 (YYLK…SAPI), and 408–428 (YPNL…LLLL).

The protein belongs to the complex I subunit 2 family.

It localises to the mitochondrion inner membrane. It carries out the reaction a ubiquinone + NADH + 5 H(+)(in) = a ubiquinol + NAD(+) + 4 H(+)(out). Its function is as follows. Core subunit of the mitochondrial membrane respiratory chain NADH dehydrogenase (Complex I) that is believed to belong to the minimal assembly required for catalysis. Complex I functions in the transfer of electrons from NADH to the respiratory chain. The immediate electron acceptor for the enzyme is believed to be ubiquinone. The chain is NADH-ubiquinone oxidoreductase chain 2 from Hyaloraphidium curvatum (Lower fungus).